We begin with the raw amino-acid sequence, 595 residues long: Glutamyl-tRNA(Gln) amidotransferase subunit B, mitochondrial (595 aa).

Residues 1–114 constitute a mitochondrion transit peptide; it reads MPRLWYSRYL…RAPTSTVAEP (114 aa). The segment at 59–78 is disordered; it reads KEEAKRSKSQSRNGRGKKQV.

It belongs to the GatB/GatE family. GatB subfamily. Subunit of the heterotrimeric GatCAB amidotransferase (AdT) complex, composed of A, B and C subunits.

The protein localises to the mitochondrion. The enzyme catalyses L-glutamyl-tRNA(Gln) + L-glutamine + ATP + H2O = L-glutaminyl-tRNA(Gln) + L-glutamate + ADP + phosphate + H(+). Allows the formation of correctly charged Gln-tRNA(Gln) through the transamidation of misacylated Glu-tRNA(Gln) in the mitochondria. The reaction takes place in the presence of glutamine and ATP through an activated gamma-phospho-Glu-tRNA(Gln). The chain is Glutamyl-tRNA(Gln) amidotransferase subunit B, mitochondrial from Talaromyces stipitatus (strain ATCC 10500 / CBS 375.48 / QM 6759 / NRRL 1006) (Penicillium stipitatum).